We begin with the raw amino-acid sequence, 566 residues long: Beta-1,4 N-acetylgalactosaminyltransferase 2 (566 aa).

The interval methionine 1 to cysteine 22 is ER exit and post-Golgi subcellular localization. The Cytoplasmic portion of the chain corresponds to methionine 1 to arginine 67. The Vesicular targeting motif lies at glycine 9 to valine 15. The chain crosses the membrane as a helical; Signal-anchor for type II membrane protein span at residues phenylalanine 68–phenylalanine 88. At glycine 89–alanine 566 the chain is on the lumenal side.

The protein belongs to the glycosyltransferase 2 family. As to quaternary structure, homodimer; disulfide-linked. Widely expressed. Highly expressed in colon and to a lesser extent in kidney, stomach, ileum and rectum.

Its subcellular location is the golgi apparatus. It is found in the trans-Golgi network membrane. The protein resides in the cytoplasmic vesicle membrane. The catalysed reaction is an N-acetyl-alpha-neuraminyl-(2-&gt;3)-beta-D-galactosyl derivative + UDP-N-acetyl-alpha-D-galactosamine = an N-acetyl-beta-D-galactosaminyl-(1-&gt;4)-[N-acetyl-alpha-neuraminyl-(2-&gt;3)]-beta-D-galactosyl derivative + UDP + H(+). It carries out the reaction a 3-O-{alpha-Neu5Ac-(2-&gt;3)-beta-D-Gal-(1-&gt;3)-[alpha-Neu5Ac-(2-&gt;6)]-alpha-D-GalNAc}-L-seryl-[protein] + UDP-N-acetyl-alpha-D-galactosamine = a 3-O-{[alpha-Neu5Ac-(2-&gt;3)]-beta-D-GalNAc-(1-&gt;4)-beta-D-Gal-(1-&gt;3)-[alpha-Neu5Ac-(2-&gt;6)]-alpha-D-GalNAc}-L-seryl-[protein] + UDP + H(+). The enzyme catalyses a 3-O-{alpha-Neu5Ac-(2-&gt;3)-beta-D-Gal-(1-&gt;3)-[alpha-Neu5Ac-(2-&gt;6)]-alpha-D-GalNAc}-L-threonyl-[protein] + UDP-N-acetyl-alpha-D-galactosamine = a 3-O-{[alpha-Neu5Ac-(2-&gt;3)]-beta-D-GalNAc-(1-&gt;4)-beta-D-Gal-(1-&gt;3)-[alpha-Neu5Ac-(2-&gt;6)]-alpha-D-GalNAc}-L-threonyl-[protein] + UDP + H(+). It catalyses the reaction a neolactoside IV(3)-alpha-NeuAc-nLc4Cer + UDP-N-acetyl-alpha-D-galactosamine = a neolactoside IV(4)-GalNAc,IV(3)-alpha-NeuAc-nLc4Cer + UDP + H(+). It participates in protein modification; protein glycosylation. Its pathway is glycolipid biosynthesis. In terms of biological role, beta-1,4 N-acetylgalactosaminyltransferase involved in the biosynthesis of Sd(a) histo-blood group antigen. Catalyzes the transfer of N-acetylgalactosamine (GalNAc) group in a beta-1,4-linkage from UDP-GalNAc to the galactose residue of NeuAcalpha2-&gt;3Gal-R to form Sd(a) glycan epitope GalNAcbeta1-&gt;4(NeuAcalpha2-&gt;3)Gal-R. The Sd(a) epitope is carried in O- and N-linked glycoproteins and glycolipids, including O-linked core 1 structures on GYPA/glycophorin, SLC4A1 and SLC29A1 in erythrocytes, N-linked glycans attached to the Tamm-Horsfall glycoprotein UMOD/uromodulin in renal fluids, O-linked core 3 glycans on mucins in colon and neolactosides in gastric mucosa. Confers protection against influenza A virus strains that attach to NeuAcalpha2-&gt;3-carrying host receptors. Modifies N-glycan chains on host receptors and prevents virus entry into cells. In Homo sapiens (Human), this protein is Beta-1,4 N-acetylgalactosaminyltransferase 2.